The primary structure comprises 30 residues: Varv peptide H (30 aa).

Positions 1 to 30 (GLPVCGETCFGGTCNTPGCSCETWPVCSRN) form a cross-link, cyclopeptide (Gly-Asn). 3 disulfide bridges follow: Cys5–Cys19, Cys9–Cys21, and Cys14–Cys27.

In terms of processing, this is a cyclic peptide.

Functionally, probably participates in a plant defense mechanism. The sequence is that of Varv peptide H from Viola arvensis (European field pansy).